A 303-amino-acid polypeptide reads, in one-letter code: Coenzyme PQQ synthesis protein B (303 aa).

It belongs to the PqqB family.

The protein operates within cofactor biosynthesis; pyrroloquinoline quinone biosynthesis. May be involved in the transport of PQQ or its precursor to the periplasm. The sequence is that of Coenzyme PQQ synthesis protein B from Pseudomonas fluorescens (strain Pf0-1).